The sequence spans 297 residues: Guanylate kinase (297 aa).

The region spanning 5-184 is the Guanylate kinase-like domain; it reads GKVIIISGPS…AVSKITDILI (180 aa). 12 to 19 is an ATP binding site; it reads GPSGVGKG. The unknown stretch occupies residues 205–297; it reads ENIVDQKYTY…IKQRSDFSGD (93 aa).

It belongs to the guanylate kinase family.

Its subcellular location is the cytoplasm. The enzyme catalyses GMP + ATP = GDP + ADP. Its function is as follows. Essential for recycling GMP and indirectly, cGMP. The chain is Guanylate kinase (gmk) from Mesoplasma florum (strain ATCC 33453 / NBRC 100688 / NCTC 11704 / L1) (Acholeplasma florum).